The chain runs to 137 residues: MKPPAAQGSPAAAAAAAPALDSAAAEDLSDALCEFDAVLADFASPFHERHFHYEEHLERMKRRSSASVSDSSGFSDSESADSLYRNSFSFSDEKLNSPTDSTPALLSATVTPQKAKLGDTKELEAFIADLDKTLASM.

Disordered regions lie at residues 1-20 (MKPPAAQGSPAAAAAAAPAL) and 57-80 (LERMKRRSSASVSDSSGFSDSESA). Over residues 65-80 (SASVSDSSGFSDSESA) the composition is skewed to low complexity. Residues serine 67, serine 69, serine 71, serine 75, serine 91, and serine 97 each carry the phosphoserine modification. Phosphothreonine; by CDK1 is present on threonine 111.

As to quaternary structure, interacts with SMAD3. Interacts with CDK1 and PLK1. Detected in brain, heart and liver (at protein level). Highly expressed in liver, skeletal muscle, kidney and pancreas. Detected at lower levels in heart, brain and placenta. Detected in aorta endothelial cells. Overexpressed in colon, breast, prostate, bladder, lung, and ovarian cancer tissues.

It is found in the cytoplasm. The protein localises to the nucleus. Its subcellular location is the cytoskeleton. It localises to the microtubule organizing center. The protein resides in the centrosome. Modulates the activity of cell cycle-specific kinases. Enhances CDK1 activity. May contribute to the regulation of the cell cycle. May inhibit growth of glioma cells by promoting arrest of mitotic progression at the G2/M transition. Fibrogenic factor contributing to the pathogenesis of renal fibrosis through fibroblast activation. In Homo sapiens (Human), this protein is Regulator of cell cycle RGCC (RGCC).